Consider the following 315-residue polypeptide: Tyrosine recombinase XerC (315 aa).

Residues 14 to 105 (PDLLNERQSW…GLRSLLHHLQ (92 aa)) form the Core-binding (CB) domain. In terms of domain architecture, Tyr recombinase spans 126 to 309 (SLPKPLTDRQ…DTARLLEIYD (184 aa)). Residues Arg-169, Lys-193, His-261, Arg-264, and His-287 contribute to the active site. Tyr-296 (O-(3'-phospho-DNA)-tyrosine intermediate) is an active-site residue.

The protein belongs to the 'phage' integrase family. XerC subfamily. As to quaternary structure, forms a cyclic heterotetrameric complex composed of two molecules of XerC and two molecules of XerD.

It localises to the cytoplasm. Site-specific tyrosine recombinase, which acts by catalyzing the cutting and rejoining of the recombining DNA molecules. The XerC-XerD complex is essential to convert dimers of the bacterial chromosome into monomers to permit their segregation at cell division. It also contributes to the segregational stability of plasmids. This Agrobacterium fabrum (strain C58 / ATCC 33970) (Agrobacterium tumefaciens (strain C58)) protein is Tyrosine recombinase XerC.